Consider the following 443-residue polypeptide: Phosphoglucosamine mutase (443 aa).

Residue Ser100 is the Phosphoserine intermediate of the active site. Positions 100, 240, 242, and 244 each coordinate Mg(2+). A Phosphoserine modification is found at Ser100.

Belongs to the phosphohexose mutase family. Mg(2+) is required as a cofactor. Activated by phosphorylation.

It carries out the reaction alpha-D-glucosamine 1-phosphate = D-glucosamine 6-phosphate. Functionally, catalyzes the conversion of glucosamine-6-phosphate to glucosamine-1-phosphate. The polypeptide is Phosphoglucosamine mutase (Carboxydothermus hydrogenoformans (strain ATCC BAA-161 / DSM 6008 / Z-2901)).